Consider the following 806-residue polypeptide: NADH:(hydroxy)cinnamate reductase subunit CrdB (806 aa).

Position 257 is an FMN phosphoryl serine (S257). Residues A310, E329, N337, T338, G342, G343, and D576 each contribute to the FAD site. Residue R635 is the Proton donor of the active site. FAD is bound by residues H742, E771, A786, and L787.

Belongs to the FAD-dependent oxidoreductase 2 family. FRD/SDH subfamily. As to quaternary structure, NADH:(hydroxy)cinnamate reductase Crd is a heterodimer composed of CrdA and CrdB subunits, encoded by adjacent genes. It depends on FAD as a cofactor. FMN is required as a cofactor. Post-translationally, is flavinylated on Ser-257 by ApbE, encoded in a neighboring gene. Covalent attachment of FMN is essential for catalytic activity.

The enzyme catalyses 3-phenylpropanoate + NAD(+) = (E)-cinnamate + NADH + H(+). It catalyses the reaction 3-(3,4-dihydroxyphenyl)propanoate + NAD(+) = (E)-caffeate + NADH + H(+). It carries out the reaction phloretate + NAD(+) = (E)-4-coumarate + NADH + H(+). The catalysed reaction is dihydroferulate + NAD(+) = (E)-ferulate + NADH + H(+). With respect to regulation, is inactivated by molecular oxygen, allowing regulation of Crd activity by medium oxygen level. Its function is as follows. Component of the NADH:(hydroxy)cinnamate reductase Crd that catalyzes the reduction of the double bond in cinnamate, p-coumarate, caffeate, and ferulate under anaerobic conditions with NADH or methyl viologen as the electron donor. Is moderately active against acrylate and practically inactive against urocanate, fumarate, methacrylate and crotonate. CrdB is the catalytic subunit that binds substrates. Is likely involved in protecting V.ruber from (hydroxy)cinnamate poisoning. The sequence is that of NADH:(hydroxy)cinnamate reductase subunit CrdB from Vibrio ruber (strain DSM 16370 / JCM 11486 / BCRC 17186 / CECT 7878 / LMG 23124 / VR1).